A 105-amino-acid chain; its full sequence is MEVRFLLFLLLLVLVINPSLVVNMVFGYMFGLLLRNNYSRLKAMIRSNQTEEEEERHEAVDVSNPFEDVDIDVMQHLKTLGLDSKVDEEDVEYFRRFWQSMLRNK.

The chain crosses the membrane as a helical span at residues Phe-5–Val-25.

This sequence belongs to the nanovirus U4 protein family.

The protein resides in the membrane. In Faba bean necrotic yellows virus (isolate Egyptian EV1-93) (FBNYV), this protein is Protein U4 (DNA-U4).